A 275-amino-acid chain; its full sequence is NH(3)-dependent NAD(+) synthetase (275 aa).

Residue Gly47–Ser54 participates in ATP binding. Residue Asp53 coordinates Mg(2+). Residue Arg141 participates in deamido-NAD(+) binding. An ATP-binding site is contributed by Thr161. Residue Glu166 participates in Mg(2+) binding. The deamido-NAD(+) site is built by Lys174 and Asp181. The ATP site is built by Lys190 and Thr212. His261–Lys262 provides a ligand contact to deamido-NAD(+).

This sequence belongs to the NAD synthetase family. Homodimer.

It carries out the reaction deamido-NAD(+) + NH4(+) + ATP = AMP + diphosphate + NAD(+) + H(+). It participates in cofactor biosynthesis; NAD(+) biosynthesis; NAD(+) from deamido-NAD(+) (ammonia route): step 1/1. Functionally, catalyzes the ATP-dependent amidation of deamido-NAD to form NAD. Uses ammonia as a nitrogen source. The protein is NH(3)-dependent NAD(+) synthetase of Enterococcus faecalis (strain ATCC 700802 / V583).